A 425-amino-acid polypeptide reads, in one-letter code: Formyl-CoA:oxalate CoA-transferase (425 aa).

Residues 17-18 (QS), arginine 38, 72-75 (LDTK), 96-98 (NFG), arginine 104, and 136-139 (KVYE) each bind CoA. Catalysis depends on aspartate 168, which acts as the Nucleophile. 247-249 (GGQ) lines the substrate pocket.

Belongs to the CoA-transferase III family. Frc subfamily. In terms of assembly, homodimer.

The enzyme catalyses formyl-CoA + oxalate = oxalyl-CoA + formate. The protein operates within metabolic intermediate degradation; oxalate degradation; CO(2) and formate from oxalate: step 1/2. Its function is as follows. Involved in the catabolism of oxalate and in the adapatation to low pH via the induction of the oxalate-dependent acid tolerance response (ATR). Catalyzes the transfer of the CoA moiety from formyl-CoA to oxalate. The sequence is that of Formyl-CoA:oxalate CoA-transferase from Rhodopseudomonas palustris (strain BisA53).